A 347-amino-acid chain; its full sequence is NADH-ubiquinone oxidoreductase chain 2 (347 aa).

9 helical membrane-spanning segments follow: residues 3 to 23 (PLAL…TMMS), 59 to 79 (YFMT…INLM), 93 to 115 (VASN…HFWV), 150 to 170 (NTNL…WGGL), 178 to 198 (ILAY…PFNP), 199 to 219 (TLTL…FMIL), 242 to 262 (IMLM…GFMP), 274 to 294 (NSII…YFYM), and 326 to 346 (LPTL…ISML).

This sequence belongs to the complex I subunit 2 family. As to quaternary structure, core subunit of respiratory chain NADH dehydrogenase (Complex I) which is composed of 45 different subunits. Interacts with TMEM242.

It localises to the mitochondrion inner membrane. It carries out the reaction a ubiquinone + NADH + 5 H(+)(in) = a ubiquinol + NAD(+) + 4 H(+)(out). Its function is as follows. Core subunit of the mitochondrial membrane respiratory chain NADH dehydrogenase (Complex I) which catalyzes electron transfer from NADH through the respiratory chain, using ubiquinone as an electron acceptor. Essential for the catalytic activity and assembly of complex I. This chain is NADH-ubiquinone oxidoreductase chain 2, found in Loxodonta africana (African elephant).